Reading from the N-terminus, the 120-residue chain is PYEKIGAELVKEVAKKTDDVAGDGTTTATVLAQALVKEGLRNVAAGANPLSLKRGIEKAVEKVTETLLKSAKEVETKEQIAATAAISAGDQSIGDLIAEAMDKVGNEGVITVEESNTFGL.

Aspartate 23–threonine 27 contributes to the ATP binding site.

The protein belongs to the chaperonin (HSP60) family. As to quaternary structure, forms a cylinder of 14 subunits composed of two heptameric rings stacked back-to-back. Interacts with the co-chaperonin GroES.

It localises to the cytoplasm. The enzyme catalyses ATP + H2O + a folded polypeptide = ADP + phosphate + an unfolded polypeptide.. Functionally, together with its co-chaperonin GroES, plays an essential role in assisting protein folding. The GroEL-GroES system forms a nano-cage that allows encapsulation of the non-native substrate proteins and provides a physical environment optimized to promote and accelerate protein folding. This chain is Chaperonin GroEL, found in Mycobacterium malmoense.